The sequence spans 209 residues: Uracil phosphoribosyltransferase (209 aa).

Residues Arg79, Arg104, and 131–139 (DPMLATGGS) each bind 5-phospho-alpha-D-ribose 1-diphosphate. Uracil is bound by residues Ile194 and 199–201 (GDA). Asp200 contacts 5-phospho-alpha-D-ribose 1-diphosphate.

The protein belongs to the UPRTase family. It depends on Mg(2+) as a cofactor.

It carries out the reaction UMP + diphosphate = 5-phospho-alpha-D-ribose 1-diphosphate + uracil. Its pathway is pyrimidine metabolism; UMP biosynthesis via salvage pathway; UMP from uracil: step 1/1. Allosterically activated by GTP. In terms of biological role, catalyzes the conversion of uracil and 5-phospho-alpha-D-ribose 1-diphosphate (PRPP) to UMP and diphosphate. This chain is Uracil phosphoribosyltransferase, found in Agathobacter rectalis (strain ATCC 33656 / DSM 3377 / JCM 17463 / KCTC 5835 / VPI 0990) (Eubacterium rectale).